Consider the following 325-residue polypeptide: Bifunctional nuclease 2 (325 aa).

A BFN domain is found at 119–254; that stretch reads CVHNNSQGRN…SLAYSDGIRS (136 aa). Residues 285-320 enclose the UVR domain; that stretch reads EAQEFGLIRNMLIAAVEERYKDAATWRDKLMLLRSK.

Belongs to the bifunctional nuclease family.

Its subcellular location is the nucleus. Bifunctional nuclease with both RNase and DNase activities. Involved in basal defense response. Participates in abscisic acid-derived callose deposition following infection by a necrotrophic pathogen. This is Bifunctional nuclease 2 (BBD2) from Oryza sativa subsp. japonica (Rice).